Here is a 156-residue protein sequence, read N- to C-terminus: Endoribonuclease YbeY (156 aa).

Residues His-122, His-126, and His-132 each coordinate Zn(2+).

The protein belongs to the endoribonuclease YbeY family. Requires Zn(2+) as cofactor.

It localises to the cytoplasm. Its function is as follows. Single strand-specific metallo-endoribonuclease involved in late-stage 70S ribosome quality control and in maturation of the 3' terminus of the 16S rRNA. The sequence is that of Endoribonuclease YbeY from Pediococcus pentosaceus (strain ATCC 25745 / CCUG 21536 / LMG 10740 / 183-1w).